The primary structure comprises 512 residues: MQPTDSKTSTSDTTEQPNETQTITIPPSKKKSKPSSKTRRRLKDAEPLPFAIDGLSHDGRGVAVYGNGFVEADGHITDKHGKKIFVSFALPGESALVKITNSRTSFEEGDAVNITANPNPERVVPPCPHFGVCGGCNLQHWQPEAQINFKQSVLAEMLVHQANVAPDHWLEPVVGDRLGYRTKARLGVRYVAKKETALVGFRERSSNFLAELNECHILDPRIGFEIENLKTLISTLESRNKIAQLELAMGEYLPELPDGDQPVALIVRNLEPLSDADIDKLKVFFAARNWQLYLQPKGADSIQRIALTAADDLSEQFGRLYYQLPEYDLTFEFIPTDFTQVNLSVNRQMTKLACDLLDLKAGERVLDLFSGLGNFSLPLARLVGETGSVVGVEGSEAMTIRAADNARRNGINNTEFYSQDLTHDCTDKPWANQGFDALLIDPPRSGAWEIMQYLPKFNAERIVYVSCNPATLARDTKALLEQGYRLTHAGVMDMFCHTGHVESIARFEKVSA.

Low complexity predominate over residues 1 to 14 (MQPTDSKTSTSDTT). Positions 1 to 45 (MQPTDSKTSTSDTTEQPNETQTITIPPSKKKSKPSSKTRRRLKDA) are disordered. The span at 15-25 (EQPNETQTITI) shows a compositional bias: polar residues. The span at 28-42 (SKKKSKPSSKTRRRL) shows a compositional bias: basic residues. Residues 41–113 (RLKDAEPLPF…TSFEEGDAVN (73 aa)) enclose the TRAM domain. [4Fe-4S] cluster-binding residues include Cys-127, Cys-133, Cys-136, and Cys-215. S-adenosyl-L-methionine is bound by residues Gln-340, Phe-369, Asn-374, Glu-393, Asp-420, and Asp-441. Cys-467 functions as the Nucleophile in the catalytic mechanism.

This sequence belongs to the class I-like SAM-binding methyltransferase superfamily. RNA M5U methyltransferase family. RlmD subfamily.

It carries out the reaction uridine(1939) in 23S rRNA + S-adenosyl-L-methionine = 5-methyluridine(1939) in 23S rRNA + S-adenosyl-L-homocysteine + H(+). Functionally, catalyzes the formation of 5-methyl-uridine at position 1939 (m5U1939) in 23S rRNA. The protein is 23S rRNA (uracil(1939)-C(5))-methyltransferase RlmD of Psychrobacter arcticus (strain DSM 17307 / VKM B-2377 / 273-4).